A 339-amino-acid polypeptide reads, in one-letter code: uncharacterized protein (339 aa).

The segment at 1-24 (IQPARRHTKNTNMAKHTTKGTGHS) is disordered. Residues 10 to 21 (NTNMAKHTTKGT) show a composition bias toward polar residues.

It is found in the mitochondrion. This is an uncharacterized protein from Zea mays (Maize).